The chain runs to 1594 residues: MRVKPQGLVVTSSAVCSSPDYLREPKYYPGGPPTPRPLLPTRPPASPPDKAFSTHTFSENPRPPPRRDPSSRRPPVLAKGDDLLPPRAARPVSQAHCPSPAPDNSSLRHWDNGRVNLRPVVQLIDIMKDLTRLSQDLQHSGVHLDCGGLRLSRPPAPPPGDLQYSFFSSPSLANSIRSPEERANPHTKSERPSHPLYEPEPEPRDSPQPGQGHGPGAAATATGLPPEPEPDGPDYSELADADILSELASLTCPEAQLLEAQALEPPSPQPEPQLLDPQPRFLDPQALEPLGEGLELPPLQPLADPLGLPSLTLQALDTLPDSLESQLLDPQALDPLPKLLDVPGRRLEPQQSLGHCQLAEPLRLDLCSPHGPPGPEGHPKYALRRTDRPKILCRRRKAGRGRKADSGPEGRLLPLPMPTGLAAALAEPPPLPPPPPPTLSGPGPVPELEPESSQTPMVPTRKGKCRGVRRMVVKMAKIPVSLGRRNKTTYKVSSLSSSLSVEGKELGLRVSSEPTPLLKMKNNGRNVVVVFPPGEMPIILKRKRGRPPKNLLLGPGKPKEPTVVAAEAATVTAATMAMPEVKKRRRRKQKLASPQPSYAADANDSKAEYSDVLAKLAFLNRQSQCAGRCSPPRCWTPSEPESVHQAPDTQSISQFLHRVQGFRRRGGKTGGFGGRGGGHAAKAARCSFSDFFEGIGKKKKVVAVAAPGLVGPGLTELGHPRKRGRGEVDAVTGKPKRKRRSRKNGTLFPEQVPSGPGFGEAGAEWVGDKGGGWAPHHGHPGGQAGRNCGFQGTEARAFASTGLESGASGRGSYYAGAPSGQTELSQERQNLFTGYFRSLLDSDDSSDLLDFALSASRPESRKASGTYAGPPSSALPAQRGLATFPSRGAKASPVAVGSSGAGADPSFQPVLPSRQTFPPGRATSYGITPATSDCRAAETFPKLAPPPSAVARSPTTHPPANTYPPQYGGYGAGQSVFASAKPFSGQDCANSKDCSFAYGSGNSLPASPSSAHSAGYAPPPTGGPCLPPSKASFFNSSEGGPFSGSAPTPLRCDSRASTVSPGGYMVPKGTTASAASVASSSSSSFQPSPENCRQFVGASQWPFRQGYGGLDWASEAFSQLYNPNFDCHGSEPNVILDISNYTPQKVKQQTAVSETFSESSSDSTQFSQPVGGGGFRRANSEASSSEGQSSLSSLEKLMMDWNEASSAPGYNWNQSVLFQSSSKPGRGRRKKVDLFEASHLGFSTSTSATASGYPSKRSTGPRQPRGGRGSGACSAKKERGGTAAKAKFIPKPQPVNPLFQDSPDLGLDYYSGDSSMSPLPSQSRAFGVGERDPCDFMGPYSMNPSTPSDGTFGQGFHCDSPSLGAAELDGKHFPPLAHPPTVFDAGLQKAYSPTCSPTLGFKEELRPPPSKLTACEPLKHGLQGASLSHAAQAHLSCRDLPLGQPHYDSPSCKGTAYWYPPGSAARSPPYEGKVGSGLLADFLGRTEAVCLSAPHLASPPATPKADKEPLEMARPPGPPRGPAAATAGYGCPLLSDLTLSPVPRDSLLPLQDTAYRYPGFMPQAHPGLGGGPKSGFLGPMAEPHPEDTFTVTSL.

Disordered regions lie at residues 19–111 (PDYL…RHWD), 149–241 (LRLS…LADA), 256–307 (QLLE…DPLG), and 367–464 (CSPH…RKGK). A compositionally biased stretch (pro residues) spans 30 to 47 (GGPPTPRPLLPTRPPASP). Residue Lys79 is modified to N6-acetyllysine. A compositionally biased stretch (polar residues) spans 165–177 (SFFSSPSLANSIR). Basic and acidic residues predominate over residues 178–193 (SPEERANPHTKSERPS). The span at 228–240 (PEPDGPDYSELAD) shows a compositional bias: acidic residues. Residue Ser267 is modified to Phosphoserine. Over residues 272–303 (PQLLDPQPRFLDPQALEPLGEGLELPPLQPLA) the composition is skewed to low complexity. Over residues 391–401 (ILCRRRKAGRG) the composition is skewed to basic residues. A DNA-binding region (a.T hook 1) is located at residues 395 to 407 (RRKAGRGRKADSG). The segment covering 427–447 (EPPPLPPPPPPTLSGPGPVPE) has biased composition (pro residues). Positions 541–553 (KRKRGRPPKNLLL) form a DNA-binding region, a.T hook 2. Residues 578–604 (MPEVKKRRRRKQKLASPQPSYAADAND) form a disordered region. Ser593 carries the post-translational modification Phosphoserine. Lys606 is covalently cross-linked (Glycyl lysine isopeptide (Lys-Gly) (interchain with G-Cter in SUMO2)). Residues 714-789 (LTELGHPRKR…PGGQAGRNCG (76 aa)) are disordered. A compositionally biased stretch (basic residues) spans 734-743 (KPKRKRRSRK). Phosphoserine occurs at positions 825 and 842. Arg887 carries the post-translational modification Omega-N-methylarginine. Ser892 is modified (phosphoserine). The segment at 942 to 967 (KLAPPPSAVARSPTTHPPANTYPPQY) is disordered. The residue at position 1060 (Ser1060) is a Phosphoserine. Disordered stretches follow at residues 1152–1191 (VSET…QSSL) and 1245–1306 (STSA…PDLG). 3 stretches are compositionally biased toward low complexity: residues 1153–1168 (SETF…QFSQ), 1180–1191 (SEASSSEGQSSL), and 1245–1264 (STSA…PRQP). Ser1180 bears the Phosphoserine mark. Ser1315, Ser1317, and Ser1392 each carry phosphoserine. Thr1394 carries the phosphothreonine modification. Phosphoserine is present on Ser1396. A Glycyl lysine isopeptide (Lys-Gly) (interchain with G-Cter in SUMO2) cross-link involves residue Lys1402. The interval 1495–1525 (HLASPPATPKADKEPLEMARPPGPPRGPAAA) is disordered. Ser1498 and Ser1540 each carry phosphoserine.

The protein localises to the nucleus. Its subcellular location is the chromosome. Transcription factor required for the proper patterning of the epidermis, which plays a key role in early epithelial morphogenesis. Directly binds promoter and enhancer regions and acts by maintaining local enhancer-promoter chromatin architecture. Interacts with many sequence-specific zinc-finger transcription factors and methyl-CpG-binding proteins to regulate the expression of mesoderm genes that wire surface ectoderm stratification. This chain is Transcription factor Gibbin, found in Mus musculus (Mouse).